The chain runs to 245 residues: 1-(5-phosphoribosyl)-5-[(5-phosphoribosylamino)methylideneamino] imidazole-4-carboxamide isomerase (245 aa).

The active-site Proton acceptor is D8. D129 functions as the Proton donor in the catalytic mechanism.

Belongs to the HisA/HisF family.

The protein localises to the cytoplasm. The enzyme catalyses 1-(5-phospho-beta-D-ribosyl)-5-[(5-phospho-beta-D-ribosylamino)methylideneamino]imidazole-4-carboxamide = 5-[(5-phospho-1-deoxy-D-ribulos-1-ylimino)methylamino]-1-(5-phospho-beta-D-ribosyl)imidazole-4-carboxamide. It functions in the pathway amino-acid biosynthesis; L-histidine biosynthesis; L-histidine from 5-phospho-alpha-D-ribose 1-diphosphate: step 4/9. The chain is 1-(5-phosphoribosyl)-5-[(5-phosphoribosylamino)methylideneamino] imidazole-4-carboxamide isomerase from Geotalea uraniireducens (strain Rf4) (Geobacter uraniireducens).